The following is a 352-amino-acid chain: Nodal homolog 4-B (352 aa).

The N-terminal stretch at 1-18 is a signal peptide; sequence MHLYFSCFILLFVPGGKS. A propeptide spanning residues 19–278 is cleaved from the precursor; the sequence is LGINSHLKHM…TIANSRRHRR (260 aa). Asn30, Asn37, Asn199, and Asn238 each carry an N-linked (GlcNAc...) asparagine glycan. A disordered region spans residues 197 to 223; sequence GKNHSEGHMKQPKKLHRAKSAERRYQQ.

Belongs to the TGF-beta family. As to quaternary structure, homodimer; disulfide-linked.

It is found in the secreted. Functionally, cooperation and regulatory loops of multiple nodals are essential for mesendoderm patterning in early embryos. Plays a role in mesoderm formation and may be required for neural development. In Xenopus laevis (African clawed frog), this protein is Nodal homolog 4-B (nodal4-b).